The primary structure comprises 348 residues: Bombesin receptor-activated protein C6orf89 homolog (348 aa).

At 1 to 58 the chain is on the cytoplasmic side; sequence MDLAANEISIYDKLSETVDLVRQTGHQCGMSEKAIEKFIRQLLEKNEPQRGPPQYPLL. The chain crosses the membrane as a helical span at residues 59–79; that stretch reads IAMYKVLLTLGLILFTAYFVI. The Extracellular segment spans residues 80–348; sequence QPFSSLAPEP…ICDGTTLSEL (269 aa).

Homodimer. Interacts with BRS3. Interacts (via N-terminus) with SIN3B. Post-translationally, glycosylated.

It is found in the golgi apparatus membrane. It localises to the cytoplasm. In terms of biological role, exhibits histone deacetylase (HDAC) enhancer properties. May play a role in cell cycle progression and wound repair of bronchial epithelial cells. This chain is Bombesin receptor-activated protein C6orf89 homolog, found in Rattus norvegicus (Rat).